A 190-amino-acid chain; its full sequence is Probable oligoribonuclease (190 aa).

Positions 19-181 (MVWVDLEMTG…QDIEESIEEL (163 aa)) constitute an Exonuclease domain. Residue tyrosine 140 is part of the active site.

This sequence belongs to the oligoribonuclease family.

3'-to-5' exoribonuclease specific for small oligoribonucleotides. The chain is Probable oligoribonuclease (rexo2-1) from Dictyostelium discoideum (Social amoeba).